The following is a 117-amino-acid chain: Large ribosomal subunit protein uL18 (117 aa).

Belongs to the universal ribosomal protein uL18 family. As to quaternary structure, part of the 50S ribosomal subunit; part of the 5S rRNA/L5/L18/L25 subcomplex. Contacts the 5S and 23S rRNAs.

This is one of the proteins that bind and probably mediate the attachment of the 5S RNA into the large ribosomal subunit, where it forms part of the central protuberance. The polypeptide is Large ribosomal subunit protein uL18 (Phytoplasma australiense).